Reading from the N-terminus, the 345-residue chain is N-acetyl-gamma-glutamyl-phosphate reductase (345 aa).

The active site involves C149.

The protein belongs to the NAGSA dehydrogenase family. Type 1 subfamily.

The protein localises to the cytoplasm. It catalyses the reaction N-acetyl-L-glutamate 5-semialdehyde + phosphate + NADP(+) = N-acetyl-L-glutamyl 5-phosphate + NADPH + H(+). It functions in the pathway amino-acid biosynthesis; L-arginine biosynthesis; N(2)-acetyl-L-ornithine from L-glutamate: step 3/4. Catalyzes the NADPH-dependent reduction of N-acetyl-5-glutamyl phosphate to yield N-acetyl-L-glutamate 5-semialdehyde. This Bacillus thuringiensis subsp. konkukian (strain 97-27) protein is N-acetyl-gamma-glutamyl-phosphate reductase.